Here is a 429-residue protein sequence, read N- to C-terminus: SVP1-like protein 2 (429 aa).

WD repeat units lie at residues proline 10 to serine 48, aspartate 50 to valine 96, alanine 178 to glutamate 218, and isoleucine 223 to proline 262. The tract at residues proline 262–glycine 297 is disordered.

It belongs to the WD repeat PROPPIN family.

It localises to the vacuole membrane. It is found in the cytoplasmic vesicle membrane. Its function is as follows. Involved in mitochondrial or peroxisomal functions and amino acid signaling pathways. The sequence is that of SVP1-like protein 2 (apg-14) from Neurospora crassa (strain ATCC 24698 / 74-OR23-1A / CBS 708.71 / DSM 1257 / FGSC 987).